The sequence spans 332 residues: Beta-ketoacyl-[acyl-carrier-protein] synthase III 2 (332 aa).

Residues C115 and H252 contribute to the active site. Residues 253–257 form an ACP-binding region; sequence SANLR. N282 is an active-site residue.

Belongs to the thiolase-like superfamily. FabH family. Homodimer.

It localises to the cytoplasm. It catalyses the reaction malonyl-[ACP] + acetyl-CoA + H(+) = 3-oxobutanoyl-[ACP] + CO2 + CoA. It functions in the pathway lipid metabolism; fatty acid biosynthesis. Functionally, catalyzes the condensation reaction of fatty acid synthesis by the addition to an acyl acceptor of two carbons from malonyl-ACP. Catalyzes the first condensation reaction which initiates fatty acid synthesis and may therefore play a role in governing the total rate of fatty acid production. Possesses both acetoacetyl-ACP synthase and acetyl transacylase activities. Its substrate specificity determines the biosynthesis of branched-chain and/or straight-chain of fatty acids. The polypeptide is Beta-ketoacyl-[acyl-carrier-protein] synthase III 2 (Halalkalibacterium halodurans (strain ATCC BAA-125 / DSM 18197 / FERM 7344 / JCM 9153 / C-125) (Bacillus halodurans)).